The sequence spans 318 residues: Phosphoenolpyruvate transferase (318 aa).

Aspartate 50 contributes to the 7,8-didemethyl-8-hydroxy-5-deazariboflavin binding site.

The protein belongs to the CofD family. Homodimer. Requires Mg(2+) as cofactor.

The enzyme catalyses enolpyruvoyl-2-diphospho-5'-guanosine + 7,8-didemethyl-8-hydroxy-5-deazariboflavin = dehydro coenzyme F420-0 + GMP + H(+). It functions in the pathway cofactor biosynthesis; coenzyme F420 biosynthesis. Catalyzes the transfer of the phosphoenolpyruvate moiety from enoylpyruvoyl-2-diphospho-5'-guanosine (EPPG) to 7,8-didemethyl-8-hydroxy-5-deazariboflavin (FO) with the formation of dehydro coenzyme F420-0 and GMP. The polypeptide is Phosphoenolpyruvate transferase (Streptomyces griseus subsp. griseus (strain JCM 4626 / CBS 651.72 / NBRC 13350 / KCC S-0626 / ISP 5235)).